A 134-amino-acid polypeptide reads, in one-letter code: Retinol-binding protein 2 (134 aa).

All-trans-retinol contacts are provided by Lys-41 and Gln-109.

Belongs to the calycin superfamily. Fatty-acid binding protein (FABP) family.

It localises to the cytoplasm. Functionally, intracellular transport of retinol. The chain is Retinol-binding protein 2 (RBP2) from Sus scrofa (Pig).